Consider the following 268-residue polypeptide: Tryptophan synthase alpha chain (268 aa).

Catalysis depends on proton acceptor residues Glu49 and Asp60.

This sequence belongs to the TrpA family. As to quaternary structure, tetramer of two alpha and two beta chains.

It carries out the reaction (1S,2R)-1-C-(indol-3-yl)glycerol 3-phosphate + L-serine = D-glyceraldehyde 3-phosphate + L-tryptophan + H2O. The protein operates within amino-acid biosynthesis; L-tryptophan biosynthesis; L-tryptophan from chorismate: step 5/5. The alpha subunit is responsible for the aldol cleavage of indoleglycerol phosphate to indole and glyceraldehyde 3-phosphate. This is Tryptophan synthase alpha chain from Pseudomonas aeruginosa (strain ATCC 15692 / DSM 22644 / CIP 104116 / JCM 14847 / LMG 12228 / 1C / PRS 101 / PAO1).